Consider the following 327-residue polypeptide: Aquaporin-1 (327 aa).

The segment at 1-34 (MSSNDSNDTDKQHTRLDPTGVDDAYIPPEQPETK) is disordered. The Cytoplasmic segment spans residues 1–48 (MSSNDSNDTDKQHTRLDPTGVDDAYIPPEQPETKHHRFKISRDTLRNH). Residues 49–69 (FIAAVGEFCGTFMFLWCAYVI) traverse the membrane as a helical segment. Topologically, residues 70 to 91 (CNVANHDVALVAAPDGSHPGQL) are extracellular. The helical transmembrane segment at 92–112 (IMIAIGFGFSVMFSIWCFAGV) threads the bilayer. The Cytoplasmic segment spans residues 113–136 (SGGALNPAVSLSLCLARAVSPTRC). Positions 118 to 120 (NPA) match the NPA 1 motif. The chain crosses the membrane as a helical span at residues 137–157 (VVMWVSQIVAGMAAGGAASAM). Residues 158–176 (TPGEVLFANSLGLGCSRTR) lie on the Extracellular side of the membrane. Residues 177–197 (GLFLEMFGTAILCLTVLMTAV) traverse the membrane as a helical segment. Topologically, residues 198 to 203 (EKRETN) are cytoplasmic. The chain crosses the membrane as a helical span at residues 204 to 224 (FMAALPIGISLFIAHVALTAY). Residues 225 to 248 (TGTGVNPARSLGAAVAARYFPHYH) are Extracellular-facing. The NPA 2 motif lies at 230-232 (NPA). A helical transmembrane segment spans residues 249-269 (WIYWIGPLLGSILAWSVWQLL). Residues 270–327 (QILDYTTYVTAEKAASTKEKAQKKVKPAVPLLWLKSNFPLLFFISRSLALNVIIFGKN) are Cytoplasmic-facing.

Belongs to the MIP/aquaporin (TC 1.A.8) family.

The protein resides in the endoplasmic reticulum membrane. It is found in the cell membrane. In terms of biological role, water channel required to facilitate the transport of water across membranes. Involved in sporulation, freeze tolerance and osmotolerance. Is non-functional in most laboratory strains. In Saccharomyces cerevisiae (Baker's yeast), this protein is Aquaporin-1 (AQY1).